We begin with the raw amino-acid sequence, 199 residues long: Protein MM_0484 (199 aa).

An AMMECR1 domain is found at 5–196; that stretch reads TEGRAAVKLA…EKEPDGEVIE (192 aa).

The protein is Protein MM_0484 of Methanosarcina mazei (strain ATCC BAA-159 / DSM 3647 / Goe1 / Go1 / JCM 11833 / OCM 88) (Methanosarcina frisia).